We begin with the raw amino-acid sequence, 504 residues long: MSTCIEGTPSTTRTPTRAWVALAVLALPVLLIAIDNTVLAFALPLIAEDFRPSATTQLWIVDVYSLVLAALLVAMGSLGDRLGRRRLLLIGGAGFAVVSALAAFAPSAELLVGARALLGVFGAMLMPSTLSLIRNIFTDASARRLAIAIWASCFTAGSALGPIVGGALLEHFHWGAVFLVAVPILLPLLVLGPRLVPESRDPNPGPFDPVSIVLSFTTMLPIVWAVKTAAHDGLSAAAAAAFAVGIVSGALFVRRQNRSATPMLDIGLFKVMPFTSSILANFLSIIGLIGFIFFISQHLQLVLGLSPLTAGLVTLPGAVVSMIAGLAVVKAAKRFAPDTLMVTGLVFVAVGFLMILLFRHNLTVAAIIASFVVLELGVGVSQTVSNDTIVASVPAAKSGAASAVSETAYELGAVVGTATLGTIFTAFYRSNVDVPAGLTPEQTGAAAESIGGAAAVAADLPAATATQLLDSARAAFDSGIAPTAVIAAMLVLAAAAVVGVAFRR.

Transmembrane regions (helical) follow at residues 19–39, 58–78, 87–107, 110–130, 145–165, 172–192, 206–226, 233–253, 275–295, 309–329, 338–358, 361–381, 408–428, and 480–500; these read WVAL…NTVL, LWIV…MGSL, LLLI…FAPS, LLVG…PSTL, LAIA…PIVG, FHWG…LVLG, PFDP…VWAV, GLSA…ALFV, TSSI…IFFI, TAGL…LAVV, DTLM…ILLF, NLTV…VGVS, AYEL…TAFY, and IAPT…VVGV.

The protein belongs to the major facilitator superfamily.

The protein localises to the cell inner membrane. With respect to regulation, inhibited by the protonophore carbonyl cyanide m-chorophenylhydrazone (CCCP). Ethidium bromide efflux is inhibited by chlorpromazine, thioridazine and verapamil. Energy-dependent efflux pump that contributes to drug resistance. Catalyzes the efflux of norfloxacin and several related fluoroquinolones (FQ). Contributes significantly to the intrinsic MICs for ethidium bromide and acriflavine. Overexpression confers low-level resistance to hydrophilic FQ such as ciprofloxacin, ofloxacin and levofloxacin, and to ethidium bromide, acridine, acriflavine, rhodamine 123 and some quaternary ammonium compounds. May contribute to resistance to certain beta-lactams. Probably uses the proton motive force to export drugs. The chain is Multidrug efflux pump LfrA from Mycolicibacterium smegmatis (strain ATCC 700084 / mc(2)155) (Mycobacterium smegmatis).